A 178-amino-acid chain; its full sequence is Mediator of RNA polymerase II transcription subunit 21 (178 aa).

The disordered stretch occupies residues 36–91; it reads DDDDVNSYSNMAANAPLPQSQQQRQQQKKQQEPQQEIEQPQQQSNPESKSISPPKE. Positions 67–85 are enriched in low complexity; that stretch reads EPQQEIEQPQQQSNPESKS. Residues 128 to 169 adopt a coiled-coil conformation; it reads NEQMNLINELSDKLQAIEEERIQKIKEKDNLLNLLESMIKEV.

The protein belongs to the Mediator complex subunit 21 family. As to quaternary structure, component of the Mediator complex.

It is found in the nucleus. In terms of biological role, component of the Mediator complex, a coactivator involved in the regulated transcription of nearly all RNA polymerase II-dependent genes. Mediator functions as a bridge to convey information from gene-specific regulatory proteins to the basal RNA polymerase II transcription machinery. Mediator is recruited to promoters by direct interactions with regulatory proteins and serves as a scaffold for the assembly of a functional preinitiation complex with RNA polymerase II and the general transcription factors. This chain is Mediator of RNA polymerase II transcription subunit 21 (SRB7), found in Candida albicans (strain SC5314 / ATCC MYA-2876) (Yeast).